The sequence spans 141 residues: Large ribosomal subunit protein uL11 (141 aa).

It belongs to the universal ribosomal protein uL11 family. Part of the ribosomal stalk of the 50S ribosomal subunit. Interacts with L10 and the large rRNA to form the base of the stalk. L10 forms an elongated spine to which L12 dimers bind in a sequential fashion forming a multimeric L10(L12)X complex. One or more lysine residues are methylated.

Forms part of the ribosomal stalk which helps the ribosome interact with GTP-bound translation factors. The chain is Large ribosomal subunit protein uL11 from Microcystis aeruginosa (strain NIES-843 / IAM M-2473).